The primary structure comprises 251 residues: Triosephosphate isomerase (251 aa).

9 to 11 lines the substrate pocket; sequence NWK. Histidine 95 acts as the Electrophile in catalysis. Glutamate 167 (proton acceptor) is an active-site residue. Substrate-binding positions include glycine 173, serine 213, and 234-235; that span reads GG.

It belongs to the triosephosphate isomerase family. In terms of assembly, homodimer.

It localises to the cytoplasm. It carries out the reaction D-glyceraldehyde 3-phosphate = dihydroxyacetone phosphate. Its pathway is carbohydrate biosynthesis; gluconeogenesis. The protein operates within carbohydrate degradation; glycolysis; D-glyceraldehyde 3-phosphate from glycerone phosphate: step 1/1. Functionally, involved in the gluconeogenesis. Catalyzes stereospecifically the conversion of dihydroxyacetone phosphate (DHAP) to D-glyceraldehyde-3-phosphate (G3P). The polypeptide is Triosephosphate isomerase (Latilactobacillus sakei subsp. sakei (strain 23K) (Lactobacillus sakei subsp. sakei)).